Consider the following 322-residue polypeptide: Putative membrane-bound redox modulator Alx (322 aa).

Residues 1–6 (MNTVGT) lie on the Periplasmic side of the membrane. A helical membrane pass occupies residues 7–27 (PLLWGGFAVVVVIMLSIDLLL). At 28-43 (QGRRGAHAMSMKQAAG) the chain is on the cytoplasmic side. The helical transmembrane segment at 44–64 (WSILWVTLSLLFNAAFWWYLA) threads the bilayer. The Periplasmic portion of the chain corresponds to 65-89 (ETQGREVADPQALAFLTGYLIEKSL). The chain crosses the membrane as a helical span at residues 90–110 (AVDNVFVWLMLFSYFSVPPAL). The Cytoplasmic segment spans residues 111-113 (QRR). A helical membrane pass occupies residues 114–134 (VLVYGVLGAIVLRTIMIFAGT). Residue tryptophan 135 is a topological domain, periplasmic. A helical membrane pass occupies residues 136 to 156 (LITQFEWLLYVFGAFLLFTGV). Over 157–198 (KMALAKEDESGIGEKPMVRWLRGHLRMTDTIENEHFFVRKNG) the chain is Cytoplasmic. A helical membrane pass occupies residues 199–219 (LLYATPLLLVLIMVEFSDVIF). The Periplasmic segment spans residues 220–225 (AVDSIP). Residues 226–246 (AIFAVTTDPFIVLTSNLFAIL) form a helical membrane-spanning segment. Residues 247 to 261 (GLRAMYFLLSGVAER) are Cytoplasmic-facing. Residues 262–282 (FSMLKYGLAVILVFIGIKMLI) traverse the membrane as a helical segment. Residues 283-286 (VDFY) are Periplasmic-facing. The helical transmembrane segment at 287-307 (HIPIAISLGVVFGILTITLVI) threads the bilayer. Residues 308-321 (NTWVNHQRDKKLRA) are Cytoplasmic-facing.

Belongs to the TerC family.

It localises to the cell inner membrane. Has been proposed to be a redox modulator. This Salmonella typhi protein is Putative membrane-bound redox modulator Alx (alx).